The primary structure comprises 1732 residues: Serine/threonine-protein kinase MRCK alpha (1732 aa).

The region spanning 77–343 (FEILKVIGRG…IEDFKKHPFF (267 aa)) is the Protein kinase domain. ATP-binding positions include 83–91 (IGRGAFGEV) and Lys106. Asp201 (proton acceptor) is an active-site residue. Ser222 and Ser234 each carry phosphoserine; by autocatalysis. The residue at position 240 (Thr240) is a Phosphothreonine; by autocatalysis. Residues 344–414 (SGIDWDNIRN…TSSCVLSDRS (71 aa)) form the AGC-kinase C-terminal domain. 3 coiled-coil regions span residues 437 to 670 (NNLA…KQKQ), 713 to 820 (SEIK…WEAQ), and 880 to 943 (LELQ…SEKG). The interval 973–1002 (CTPAGKGRRIADSAPLPVHTPTLRKKGCPA) is disordered. The Phorbol-ester/DAG-type zinc finger occupies 1012 to 1062 (THQFFVKSFTAPTKCHQCTSLMVGLIRQGCSCEVCGFSCHITCVNKAPTTC). A PH domain is found at 1082–1201 (GTAYEGHVRI…WVGVLSELHK (120 aa)). At Ser1127 the chain carries Phosphoserine. Positions 1227–1499 (IKTTQAAAII…RPLNTEGSLN (273 aa)) constitute a CNH domain. Ser1545 is modified (phosphoserine). Positions 1571-1584 (ISNPTNFNHIAHMG) constitute a CRIB domain. Residues 1592-1732 (LKDLPMNPRP…ESTDRGSWDP (141 aa)) are disordered. Over residues 1604–1619 (SRTVFSGSVSIPSITK) the composition is skewed to polar residues. Phosphoserine is present on residues Ser1611, Ser1613, Ser1629, Ser1651, Ser1664, Ser1669, Ser1693, Ser1719, and Ser1721. A compositionally biased stretch (low complexity) spans 1625 to 1640 (GRSMSASSGLSARSSA). Low complexity predominate over residues 1665–1674 (PSEGSLSSGG).

The protein belongs to the protein kinase superfamily. AGC Ser/Thr protein kinase family. DMPK subfamily. As to quaternary structure, homodimer and homotetramer via the coiled coil regions. Interacts tightly with GTP-bound but not GDP-bound CDC42. Forms a tripartite complex with MYO18A and LURAP1 with the latter acting as an adapter connecting CDC42BPA and MYO18A. LURAP1 binding results in activation of CDC42BPA by abolition of its negative autoregulation. Interacts with LURAP1. Interacts (via AGC-kinase C-terminal domain) with FAM89B/LRAP25 (via LRR repeat). Forms a tripartite complex with FAM89B/LRAP25 and LIMK1. The cofactor is Mg(2+). Proteolytically cleaved by caspases upon apoptosis induction. The cleavage at Asp-478 by CASP3 increases its kinase activity (in vitro). As to expression, highly expressed in the brain and lung and present in lower levels in all other tissues tested.

It localises to the cytoplasm. The protein resides in the cell projection. The protein localises to the lamellipodium. It catalyses the reaction L-seryl-[protein] + ATP = O-phospho-L-seryl-[protein] + ADP + H(+). It carries out the reaction L-threonyl-[protein] + ATP = O-phospho-L-threonyl-[protein] + ADP + H(+). With respect to regulation, maintained in an inactive, closed conformation by an interaction between the kinase domain and the negative autoregulatory C-terminal coiled-coil region. Agonist binding to the phorbol ester binding site disrupts this, releasing the kinase domain to allow N-terminus-mediated dimerization and kinase activation by transautophosphorylation. Inhibited by chelerythrine chloride. Serine/threonine-protein kinase which is an important downstream effector of CDC42 and plays a role in the regulation of cytoskeleton reorganization and cell migration. Regulates actin cytoskeletal reorganization via phosphorylation of PPP1R12A and MYL9/MLC2. In concert with MYO18A and LURAP1, is involved in modulating lamellar actomyosin retrograde flow that is crucial to cell protrusion and migration. Phosphorylates: PPP1R12C, LIMK1 and LIMK2. May play a role in TFRC-mediated iron uptake. In concert with FAM89B/LRAP25 mediates the targeting of LIMK1 to the lamellipodium resulting in its activation and subsequent phosphorylation of CFL1 which is important for lamellipodial F-actin regulation. Triggers the formation of an extrusion apical actin ring required for epithelial extrusion of apoptotic cells. This is Serine/threonine-protein kinase MRCK alpha from Rattus norvegicus (Rat).